Reading from the N-terminus, the 315-residue chain is MDGVVIKNTGSQYLVRCTDGTELYCMAKGNLRLKGIRSTNPVTVGDRVEIVPASQDGQPAYIKRIHPRRNYIIRRASNLSKESHILGANLDAAVLVCTINDPVTTTVFIDRFLATAEAYRVPVILVFNKIDCYTQEDRLQLDRLSAVYTAIGYPCCHVSAITGEGLPDLKSLLDGKLTLLAGHSGVGKSSLINALIPHADLRTGAISQAHHTGMHTTTFSQMIDFPDLSPGSALIDTPGIKGFGTLEMGEYEVSHYFPEIFAASKGCRFGNCTHTHEPGCAVLEALRRGEIAESRYISYLSILEDENAERYRPEY.

In terms of domain architecture, CP-type G spans 79 to 243 (LSKESHILGA…LIDTPGIKGF (165 aa)). GTP contacts are provided by residues 128–131 (NKID) and 182–190 (GHSGVGKSS). C267, C272, H274, and C280 together coordinate Zn(2+).

The protein belongs to the TRAFAC class YlqF/YawG GTPase family. RsgA subfamily. Monomer. Associates with 30S ribosomal subunit, binds 16S rRNA. The cofactor is Zn(2+).

Its subcellular location is the cytoplasm. One of several proteins that assist in the late maturation steps of the functional core of the 30S ribosomal subunit. Helps release RbfA from mature subunits. May play a role in the assembly of ribosomal proteins into the subunit. Circularly permuted GTPase that catalyzes slow GTP hydrolysis, GTPase activity is stimulated by the 30S ribosomal subunit. This Porphyromonas gingivalis (strain ATCC BAA-308 / W83) protein is Small ribosomal subunit biogenesis GTPase RsgA.